Consider the following 65-residue polypeptide: Large ribosomal subunit protein uL29 (65 aa).

Belongs to the universal ribosomal protein uL29 family.

In Buchnera aphidicola subsp. Acyrthosiphon pisum (strain APS) (Acyrthosiphon pisum symbiotic bacterium), this protein is Large ribosomal subunit protein uL29 (rpmC).